Consider the following 734-residue polypeptide: Photosystem I P700 chlorophyll a apoprotein A2 (734 aa).

The next 8 membrane-spanning stretches (helical) occupy residues 46–69 (IFAS…FHVA), 135–158 (LYTG…LHLQ), 175–199 (LNHH…HVAI), 273–291 (MAHH…GHMY), 330–353 (LHFQ…QHMY), 369–395 (AALY…IFFI), 417–439 (AIIS…LYVH), and 517–535 (FLVH…LILV). Cys559 and Cys568 together coordinate [4Fe-4S] cluster. The next 2 membrane-spanning stretches (helical) occupy residues 575-596 (AFYL…YWHW) and 643-665 (LSVW…MFLI). Chlorophyll a-binding residues include His654, Met662, and Tyr670. Trp671 serves as a coordination point for phylloquinone. A helical membrane pass occupies residues 707-727 (LVGLAHFSVGYIFTYAAFLIA).

It belongs to the PsaA/PsaB family. In terms of assembly, the PsaA/B heterodimer binds the P700 chlorophyll special pair and subsequent electron acceptors. PSI consists of a core antenna complex that captures photons, and an electron transfer chain that converts photonic excitation into a charge separation. The eukaryotic PSI reaction center is composed of at least 11 subunits. The cofactor is P700 is a chlorophyll a/chlorophyll a' dimer, A0 is one or more chlorophyll a, A1 is one or both phylloquinones and FX is a shared 4Fe-4S iron-sulfur center..

It localises to the plastid. The protein resides in the chloroplast thylakoid membrane. It carries out the reaction reduced [plastocyanin] + hnu + oxidized [2Fe-2S]-[ferredoxin] = oxidized [plastocyanin] + reduced [2Fe-2S]-[ferredoxin]. In terms of biological role, psaA and PsaB bind P700, the primary electron donor of photosystem I (PSI), as well as the electron acceptors A0, A1 and FX. PSI is a plastocyanin-ferredoxin oxidoreductase, converting photonic excitation into a charge separation, which transfers an electron from the donor P700 chlorophyll pair to the spectroscopically characterized acceptors A0, A1, FX, FA and FB in turn. Oxidized P700 is reduced on the lumenal side of the thylakoid membrane by plastocyanin. The sequence is that of Photosystem I P700 chlorophyll a apoprotein A2 from Cucumis sativus (Cucumber).